The primary structure comprises 149 residues: Cyanate hydratase (149 aa).

Active-site residues include arginine 90, glutamate 93, and serine 116.

It belongs to the cyanase family.

It carries out the reaction cyanate + hydrogencarbonate + 3 H(+) = NH4(+) + 2 CO2. Functionally, catalyzes the reaction of cyanate with bicarbonate to produce ammonia and carbon dioxide. This chain is Cyanate hydratase, found in Aquifex aeolicus (strain VF5).